Reading from the N-terminus, the 938-residue chain is Protein SEY1 (938 aa).

The segment at 1 to 159 (MTSQSHGAPP…QKSAKSTPGS (159 aa)) is disordered. Over 1–839 (MTSQSHGAPP…KRSTIQSTTQ (839 aa)) the chain is Cytoplasmic. Positions 33-45 (SVSSSHSSHSPVT) are enriched in low complexity. Residues 74 to 94 (IAAPEPIAAPEPIPAPEPIAA) show a composition bias toward pro residues. Over residues 100–118 (LKSEHKPVEREHKPVERKP) the composition is skewed to basic and acidic residues. Polar residues predominate over residues 146–158 (VPTSQKSAKSTPG). The GB1/RHD3-type G domain occupies 192-423 (GLDYHVVAVF…DPNYVFKPVY (232 aa)). 202 to 209 (GSQSTGKS) contacts GTP. Residues 603 to 630 (SYDDTLAALEQELDTLRDHKSKVEIDRL) are a coiled coil. The helical transmembrane segment at 840 to 860 (IPLYMYGLLLLLGWNEIMAVL) threads the bilayer. Over 861 to 863 (RSP) the chain is Lumenal. Residues 864–884 (VYFMFLLVAAGAAYVIHTLHL) traverse the membrane as a helical segment. The Cytoplasmic segment spans residues 885 to 938 (WGPLTHMTNTMIAEATDMAKAKLKQVLNEAPTGETREREAPVGSSRDDVELKDL). A disordered region spans residues 911 to 938 (LNEAPTGETREREAPVGSSRDDVELKDL). Residues 918–938 (ETREREAPVGSSRDDVELKDL) are compositionally biased toward basic and acidic residues.

It belongs to the TRAFAC class dynamin-like GTPase superfamily. GB1/RHD3 GTPase family. RHD3 subfamily.

It is found in the endoplasmic reticulum membrane. Its function is as follows. Cooperates with the reticulon proteins and tubule-shaping DP1 family proteins to generate and maintain the structure of the tubular endoplasmic reticulum network. Has GTPase activity, which is required for its function in ER organization. This chain is Protein SEY1, found in Yarrowia lipolytica (strain CLIB 122 / E 150) (Yeast).